The following is a 290-amino-acid chain: Small ribosomal subunit biogenesis GTPase RsgA (290 aa).

One can recognise a CP-type G domain in the interval lysine 63–leucine 220. Residues asparagine 112–aspartate 115 and glycine 162–threonine 170 each bind GTP. The Zn(2+) site is built by cysteine 244, cysteine 249, histidine 251, and cysteine 257.

It belongs to the TRAFAC class YlqF/YawG GTPase family. RsgA subfamily. In terms of assembly, monomer. Associates with 30S ribosomal subunit, binds 16S rRNA. The cofactor is Zn(2+).

It localises to the cytoplasm. Its function is as follows. One of several proteins that assist in the late maturation steps of the functional core of the 30S ribosomal subunit. Helps release RbfA from mature subunits. May play a role in the assembly of ribosomal proteins into the subunit. Circularly permuted GTPase that catalyzes slow GTP hydrolysis, GTPase activity is stimulated by the 30S ribosomal subunit. This chain is Small ribosomal subunit biogenesis GTPase RsgA, found in Carboxydothermus hydrogenoformans (strain ATCC BAA-161 / DSM 6008 / Z-2901).